Reading from the N-terminus, the 89-residue chain is Small ribosomal subunit protein uS15 (89 aa).

The protein belongs to the universal ribosomal protein uS15 family. In terms of assembly, part of the 30S ribosomal subunit. Forms a bridge to the 50S subunit in the 70S ribosome, contacting the 23S rRNA.

Its function is as follows. One of the primary rRNA binding proteins, it binds directly to 16S rRNA where it helps nucleate assembly of the platform of the 30S subunit by binding and bridging several RNA helices of the 16S rRNA. In terms of biological role, forms an intersubunit bridge (bridge B4) with the 23S rRNA of the 50S subunit in the ribosome. The sequence is that of Small ribosomal subunit protein uS15 from Xanthobacter autotrophicus (strain ATCC BAA-1158 / Py2).